The primary structure comprises 294 residues: Elongation factor Ts (294 aa).

Residues 81-84 form an involved in Mg(2+) ion dislocation from EF-Tu region; the sequence is TDFV.

It belongs to the EF-Ts family.

Its subcellular location is the cytoplasm. Associates with the EF-Tu.GDP complex and induces the exchange of GDP to GTP. It remains bound to the aminoacyl-tRNA.EF-Tu.GTP complex up to the GTP hydrolysis stage on the ribosome. This Mycoplasmopsis pulmonis (strain UAB CTIP) (Mycoplasma pulmonis) protein is Elongation factor Ts (tsf).